Reading from the N-terminus, the 154-residue chain is Transcriptional repressor NrdR (154 aa).

A zinc finger lies at 3-34; sequence CPFCAHPDTRVADSRLMEERNAVRRRRHCPNC. Residues 49-139 enclose the ATP-cone domain; it reads PAVIGPDKKR…LHKRFDNPAD (91 aa).

This sequence belongs to the NrdR family. It depends on Zn(2+) as a cofactor.

Its function is as follows. Negatively regulates transcription of bacterial ribonucleotide reductase nrd genes and operons by binding to NrdR-boxes. This chain is Transcriptional repressor NrdR, found in Neisseria meningitidis serogroup B (strain ATCC BAA-335 / MC58).